The primary structure comprises 1174 residues: Male determiner protein Mdmd(V) (1174 aa).

Basic and acidic residues predominate over residues 1-15 (MNATDAESRKPENKP). Disordered stretches follow at residues 1-51 (MNAT…SGQR), 79-110 (RKDG…PVEL), and 136-259 (KQLS…LRRS). Positions 16-35 (SSESSSSGSTSGSSDGEVSS) are enriched in low complexity. Positions 36–47 (KTYFKNNKSKVL) are enriched in polar residues. A compositionally biased stretch (basic and acidic residues) spans 79–92 (RKDGSNEMLPKEDS). A compositionally biased stretch (polar residues) spans 93–102 (INTNHNYTTD). Residues 138–153 (LSAYRSRSRSTRLSYS) show a composition bias toward low complexity. The span at 167 to 180 (SRYKKSVLRSRRTS) shows a compositional bias: basic residues. Basic and acidic residues predominate over residues 183–200 (HGRDSSTTKRSVSRDKDN). Over residues 201–223 (RLRRRIGSSRSHTRSHSRFRRSE) the composition is skewed to basic residues. The segment covering 235–259 (RSQERRHERRRSMSSDYERIALRRS) has biased composition (basic and acidic residues). An MIF4G domain is found at 348–531 (KKYIHGYINK…KVLFQVRRDG (184 aa)). Over residues 597–608 (DSDGSFGSGSNS) the composition is skewed to low complexity. Positions 597–616 (DSDGSFGSGSNSETALSDCD) are disordered. The MI domain maps to 641–757 (ALRRTIYLTL…SWDVLDCIKL (117 aa)). Residues 840-857 (SAPSSSSSSSLSSELSAP) are compositionally biased toward low complexity. Disordered regions lie at residues 840–1045 (SAPS…SRTK) and 1095–1133 (RKDN…NHSR). The span at 869 to 909 (KKKHKGKNKKMTKKKNPSKKKEKTKKIVGKNKIAAKNKTIK) shows a compositional bias: basic residues. Over residues 910–924 (RRTDKDNSSSKDNFL) the composition is skewed to basic and acidic residues. The segment covering 926-957 (SESSSNESISLDSLSSELFAPSSYSSSESSND) has biased composition (low complexity). Over residues 963–1001 (KHKGKNKKMTKKKNPSNKREKTKKKLSKNKKAPNKNTKK) the composition is skewed to basic residues. A compositionally biased stretch (low complexity) spans 1010-1020 (SSESSISESKS). The span at 1034 to 1045 (RKKRVTSKSRTK) shows a compositional bias: basic residues. Basic and acidic residues predominate over residues 1095 to 1118 (RKDNYGNRQNHEISQRHDSEIKRR). A compositionally biased stretch (basic residues) spans 1119 to 1130 (REERKKRHHEKN).

This sequence belongs to the CWC22 family. Component of the spliceosome C complex.

The protein localises to the nucleus speckle. Male determiner protein (M-factor) that controls male somatic sexual differentiation. Acts as a dominant factor that regulates the mRNA splicing of transformer (tra) and doublesex (dsx) transcripts and promotes expression of male splice forms of tra and dsx. Probably acts as a component of the spliceosome C complex required for mRNA splicing factor and exon-junction complex (EJC) assembly. Hinders eIF4AIII from non-specifically binding RNA and escorts it to the splicing machinery to promote EJC assembly on mature mRNAs. The sequence is that of Male determiner protein Mdmd(V) from Musca domestica (House fly).